Here is a 216-residue protein sequence, read N- to C-terminus: Adenylate kinase (216 aa).

10-15 provides a ligand contact to ATP; the sequence is GAGKGT. The tract at residues 30 to 59 is NMP; that stretch reads STGDIFRANIKEKTPLGIEAKRYMDNGQLV. Residues Thr31, Arg36, 57-59, 85-88, and Gln92 each bind AMP; these read QLV and GFPR. The LID stretch occupies residues 126–163; that stretch reads GRRVCTSCGASYHIRFNPPKIEGKCDICDNELIQRKDD. Residue Arg127 coordinates ATP. Zn(2+)-binding residues include Cys130 and Cys133. 136–137 contacts ATP; sequence SY. Positions 150 and 153 each coordinate Zn(2+). Residues Arg160 and Arg171 each contribute to the AMP site. ATP is bound at residue Glu199.

Belongs to the adenylate kinase family. Monomer.

It is found in the cytoplasm. The enzyme catalyses AMP + ATP = 2 ADP. It participates in purine metabolism; AMP biosynthesis via salvage pathway; AMP from ADP: step 1/1. Functionally, catalyzes the reversible transfer of the terminal phosphate group between ATP and AMP. Plays an important role in cellular energy homeostasis and in adenine nucleotide metabolism. The sequence is that of Adenylate kinase from Clostridium botulinum (strain Loch Maree / Type A3).